Consider the following 322-residue polypeptide: Pantothenate kinase (322 aa).

Residue 101–108 (GSVAVGKS) participates in ATP binding.

This sequence belongs to the prokaryotic pantothenate kinase family.

The protein resides in the cytoplasm. It carries out the reaction (R)-pantothenate + ATP = (R)-4'-phosphopantothenate + ADP + H(+). Its pathway is cofactor biosynthesis; coenzyme A biosynthesis; CoA from (R)-pantothenate: step 1/5. The sequence is that of Pantothenate kinase from Psychromonas ingrahamii (strain DSM 17664 / CCUG 51855 / 37).